The following is a 492-amino-acid chain: MTDLHRLSIRELAEGLSQAKFSSRELTEHYLKRIAKIDPQVKSYVTVTPEQALREADAADAALKAGNATALTGIPLAHKDIFCTKGIKTTAGSKMLDNFISPYDATVVEKTKAAGLVTLGKVNMDEFAMGSTSESSYVGATSNPWALDHVPGGSSGGSAAAVAADLAPFATGTDTGGSIRQPASFCGLTGLKPTYGRVSRFGIIAYASSLDQAGPMARSAEDCAYLMNVIAGHDAKDSTSVKKEVDDYVANLNNTSVKGLRIGIPKQYFNVAGLDADVKARVEESLKKLEEMGAALVEIDLNMTEAYVPTYYLIAPAEASSNLSRYDGVRYGYRCENPADLMDLYKRSRSEGFGPEVQRRILIGTYALSAGYYDAYYVKAQKVRRLIQQDFLKAFENVDVIAAPAAPTTAYKIGASLDPVEMYLGDIYTIAVNLAGLPAINAPVGFDKDNLPVGLQLIGNYWSESQLLSIVHQYQQNTDWHTKRAAIAEENA.

Catalysis depends on charge relay system residues Lys79 and Ser154. Ser178 acts as the Acyl-ester intermediate in catalysis.

The protein belongs to the amidase family. GatA subfamily. In terms of assembly, heterotrimer of A, B and C subunits.

The enzyme catalyses L-glutamyl-tRNA(Gln) + L-glutamine + ATP + H2O = L-glutaminyl-tRNA(Gln) + L-glutamate + ADP + phosphate + H(+). Functionally, allows the formation of correctly charged Gln-tRNA(Gln) through the transamidation of misacylated Glu-tRNA(Gln) in organisms which lack glutaminyl-tRNA synthetase. The reaction takes place in the presence of glutamine and ATP through an activated gamma-phospho-Glu-tRNA(Gln). The sequence is that of Glutamyl-tRNA(Gln) amidotransferase subunit A from Acinetobacter baumannii (strain ACICU).